The chain runs to 155 residues: Ribonuclease H (155 aa).

The RNase H type-1 domain maps to 1–146 (MPELFAYTDG…ADELARAGMK (146 aa)). Residues Asp-9, Glu-52, Asp-74, and Asp-138 each coordinate Mg(2+).

Belongs to the RNase H family. Monomer. Mg(2+) serves as cofactor.

It localises to the cytoplasm. It carries out the reaction Endonucleolytic cleavage to 5'-phosphomonoester.. Endonuclease that specifically degrades the RNA of RNA-DNA hybrids. The sequence is that of Ribonuclease H from Ruegeria pomeroyi (strain ATCC 700808 / DSM 15171 / DSS-3) (Silicibacter pomeroyi).